We begin with the raw amino-acid sequence, 752 residues long: Complement C2 (752 aa).

The N-terminal stretch at 1-20 (MGPLMVLFCLLFVYTGLADS) is a signal peptide. 3 Sushi domains span residues 22–86 (PSCP…VCKP), 87–146 (VRCP…VCDN), and 149–206 (GHCP…ICRQ). 6 disulfides stabilise this stretch: cysteine 24–cysteine 64, cysteine 51–cysteine 84, cysteine 89–cysteine 131, cysteine 117–cysteine 144, cysteine 151–cysteine 191, and cysteine 177–cysteine 204. N-linked (GlcNAc...) asparagine glycosylation is present at asparagine 29. N-linked (GlcNAc...) asparagine glycosylation occurs at asparagine 112. The 199-residue stretch at 254–452 (NLYLLLDCSQ…KALHQVFEHM (199 aa)) folds into the VWFA domain. Positions 260–264 (DCSQS) match the MIDAS-like motif motif. The Mg(2+) site is built by serine 262 and serine 264. Asparagine 290 and asparagine 333 each carry an N-linked (GlcNAc...) asparagine glycan. A Mg(2+)-binding site is contributed by threonine 337. 3 cysteine pairs are disulfide-bonded: cysteine 463–cysteine 581, cysteine 492–cysteine 508, and cysteine 584–cysteine 600. Positions 464 to 744 (GVGNMSANAS…MQPWLRQHLG (281 aa)) constitute a Peptidase S1 domain. N-linked (GlcNAc...) asparagine glycans are attached at residues asparagine 467 and asparagine 471. Residues histidine 507 and aspartate 561 each act as charge relay system in the active site. Residues asparagine 621 and asparagine 651 are each glycosylated (N-linked (GlcNAc...) asparagine). Intrachain disulfides connect cysteine 638/cysteine 665 and cysteine 675/cysteine 705. Serine 679 serves as the catalytic Charge relay system.

Belongs to the peptidase S1 family. Serine protease component of the C3 convertase, also named C4bC2b, composed of the serine protease complement C2b and complement C4b. Serine protease component of the C5 convertase, also named C4bC2bC3b, composed of the serine protease complement C2b, complement C3b, as well as complement C4b. Mg(2+) serves as cofactor. Requires Mn(2+) as cofactor. In terms of processing, cleaved and activated by different proteases depending on the complement pathway to generate complement C2a and serine protease complement C2b chains. Cleaved and activated by C1S following activation by the classical complement system. Cleaved and activated by MASP2 following activation by the lectin complement system. Cleaved and activated by GZMK following activation by the GZMK complement system.

Its subcellular location is the secreted. The protein resides in the cell surface. The catalysed reaction is Selective cleavage of Arg-|-Ser bond in complement component C3 alpha-chain to form C3a and C3b, and Arg-|-Xaa bond in complement component C5 alpha-chain to form C5a and C5b.. Functionally, precursor of the catalytic component of the C3 and C5 convertase complexes, which are part of the complement pathway, a cascade of proteins that leads to phagocytosis and breakdown of pathogens and signaling that strengthens the adaptive immune system. Component C2 is part of the classical, lectin and GZMK complement systems. Catalytic component of the complement C3 and C5 convertase complexes. Following complement activation, recruited to the surface of pathogens by complement C4b opsonin to form the C3 convertase, or C3b and C4b opsonins to form the C5 convertase. As part of the C3 convertase, cleaves and activate C3 into C3a anaphylatoxin and C3b opsonin, the next components of the complement pathways. As part of the C5 convertase, cleaves and activate C5 into C5a anaphylatoxin and C5b component of the membrane attack complex. This Gorilla gorilla gorilla (Western lowland gorilla) protein is Complement C2.